Consider the following 211-residue polypeptide: Thiamine-phosphate synthase (211 aa).

4-amino-2-methyl-5-(diphosphooxymethyl)pyrimidine-binding positions include 36–40 (QLRDK) and Asn-68. Mg(2+) is bound by residues Asp-69 and Asp-88. Ser-107 provides a ligand contact to 4-amino-2-methyl-5-(diphosphooxymethyl)pyrimidine. 133 to 135 (TKS) is a binding site for 2-[(2R,5Z)-2-carboxy-4-methylthiazol-5(2H)-ylidene]ethyl phosphate. A 4-amino-2-methyl-5-(diphosphooxymethyl)pyrimidine-binding site is contributed by Lys-136. 2-[(2R,5Z)-2-carboxy-4-methylthiazol-5(2H)-ylidene]ethyl phosphate is bound by residues Gly-164 and 184-185 (IS).

It belongs to the thiamine-phosphate synthase family. It depends on Mg(2+) as a cofactor.

The enzyme catalyses 2-[(2R,5Z)-2-carboxy-4-methylthiazol-5(2H)-ylidene]ethyl phosphate + 4-amino-2-methyl-5-(diphosphooxymethyl)pyrimidine + 2 H(+) = thiamine phosphate + CO2 + diphosphate. The catalysed reaction is 2-(2-carboxy-4-methylthiazol-5-yl)ethyl phosphate + 4-amino-2-methyl-5-(diphosphooxymethyl)pyrimidine + 2 H(+) = thiamine phosphate + CO2 + diphosphate. It catalyses the reaction 4-methyl-5-(2-phosphooxyethyl)-thiazole + 4-amino-2-methyl-5-(diphosphooxymethyl)pyrimidine + H(+) = thiamine phosphate + diphosphate. Its pathway is cofactor biosynthesis; thiamine diphosphate biosynthesis; thiamine phosphate from 4-amino-2-methyl-5-diphosphomethylpyrimidine and 4-methyl-5-(2-phosphoethyl)-thiazole: step 1/1. Its function is as follows. Condenses 4-methyl-5-(beta-hydroxyethyl)thiazole monophosphate (THZ-P) and 2-methyl-4-amino-5-hydroxymethyl pyrimidine pyrophosphate (HMP-PP) to form thiamine monophosphate (TMP). This chain is Thiamine-phosphate synthase, found in Halalkalibacterium halodurans (strain ATCC BAA-125 / DSM 18197 / FERM 7344 / JCM 9153 / C-125) (Bacillus halodurans).